The chain runs to 985 residues: Thioredoxin domain-containing protein 11 (985 aa).

Over residues Met-1–Ser-11 the composition is skewed to gly residues. Residues Met-1 to Thr-38 are disordered. The segment covering Gly-29–Thr-38 has biased composition (low complexity). The chain crosses the membrane as a helical span at residues Leu-65–Ser-85. The region spanning Ile-92–Lys-214 is the Thioredoxin 1 domain. Disulfide bonds link Cys-469–Cys-472 and Cys-719–Cys-722. The Thioredoxin 2 domain maps to Leu-649 to Asp-799. A coiled-coil region spans residues Val-821 to Thr-919. Ser-828 is modified (phosphoserine). The disordered stretch occupies residues Arg-935–Asp-985.

Belongs to the protein disulfide isomerase family. Interacts with the cytoplasmic part of DUOX1 and DUOX2. Interacts with TPO and CYBA. In terms of tissue distribution, widely expressed at low level. Expressed at higher level in thyroid and prostate.

It is found in the endoplasmic reticulum membrane. May act as a redox regulator involved in DUOX proteins folding. The interaction with DUOX1 and DUOX2 suggest that it belongs to a multiprotein complex constituting the thyroid H(2)O(2) generating system. It is however not sufficient to assist DUOX1 and DUOX2 in H(2)O(2) generation. This Homo sapiens (Human) protein is Thioredoxin domain-containing protein 11 (TXNDC11).